Reading from the N-terminus, the 158-residue chain is Transcriptional repressor NrdR (158 aa).

Residues 3 to 34 (CPYCGYPDSRVIDSRPTDDNTAIRRRRECLKC) fold into a zinc finger. Positions 49 to 139 (ILVIKKDNRR…VYRQFKDINT (91 aa)) constitute an ATP-cone domain.

The protein belongs to the NrdR family. The cofactor is Zn(2+).

Its function is as follows. Negatively regulates transcription of bacterial ribonucleotide reductase nrd genes and operons by binding to NrdR-boxes. This Caldanaerobacter subterraneus subsp. tengcongensis (strain DSM 15242 / JCM 11007 / NBRC 100824 / MB4) (Thermoanaerobacter tengcongensis) protein is Transcriptional repressor NrdR.